Consider the following 126-residue polypeptide: MHLSQLLACALLLTLLSLRPSEAKPGAPPKVPRTPPGEEVAEPQAAGGGQKKGDKTPGGGGANLKGDRSRLLRDLRVDTKSRAAWARLLHEHPNARKYKGGNKKGLSKGCFGLKLDRIGSMSGLGC.

The first 23 residues, 1–23 (MHLSQLLACALLLTLLSLRPSEA), serve as a signal peptide directing secretion. The segment at 19–72 (RPSEAKPGAPPKVPRTPPGEEVAEPQAAGGGQKKGDKTPGGGGANLKGDRSRLL) is disordered. Positions 24–73 (KPGAPPKVPRTPPGEEVAEPQAAGGGQKKGDKTPGGGGANLKGDRSRLLR) are excised as a propeptide. A compositionally biased stretch (pro residues) spans 26 to 35 (GAPPKVPRTP). Positions 46–63 (AGGGQKKGDKTPGGGGAN) are enriched in gly residues. A disulfide bond links Cys-110 and Cys-126.

This sequence belongs to the natriuretic peptide family. Post-translationally, degraded by IDE (in vitro).

It localises to the secreted. Its function is as follows. Hormone which plays a role in endochondral ossification through regulation of cartilaginous growth plate chondrocytes proliferation and differentiation. May also be vasoactive and natriuretic. Acts by specifically binding and stimulating NPR2 to produce cGMP. Binds the clearance receptor NPR3. This is C-type natriuretic peptide (NPPC) from Sus scrofa (Pig).